A 697-amino-acid chain; its full sequence is Elongation factor G 2 (697 aa).

The tr-type G domain maps to 5 to 280 (SKYRNIGIFA…AVVDYLPAPD (276 aa)). GTP-binding positions include 14 to 21 (AHVDAGKT), 78 to 82 (DTPGH), and 132 to 135 (NKLD).

Belongs to the TRAFAC class translation factor GTPase superfamily. Classic translation factor GTPase family. EF-G/EF-2 subfamily.

The protein resides in the cytoplasm. Catalyzes the GTP-dependent ribosomal translocation step during translation elongation. During this step, the ribosome changes from the pre-translocational (PRE) to the post-translocational (POST) state as the newly formed A-site-bound peptidyl-tRNA and P-site-bound deacylated tRNA move to the P and E sites, respectively. Catalyzes the coordinated movement of the two tRNA molecules, the mRNA and conformational changes in the ribosome. The chain is Elongation factor G 2 from Shewanella denitrificans (strain OS217 / ATCC BAA-1090 / DSM 15013).